A 1190-amino-acid chain; its full sequence is Laminin subunit gamma-2 (1190 aa).

Residues 1 to 21 (MPALWLRCGLCLALLLPAARA) form the signal peptide. 12 disulfides stabilise this stretch: cysteine 28-cysteine 37, cysteine 30-cysteine 53, cysteine 56-cysteine 65, cysteine 68-cysteine 81, cysteine 84-cysteine 96, cysteine 86-cysteine 102, cysteine 104-cysteine 113, cysteine 116-cysteine 128, cysteine 139-cysteine 150, cysteine 141-cysteine 155, cysteine 157-cysteine 166, and cysteine 169-cysteine 184. Laminin EGF-like domains follow at residues 28–83 (CDCN…RCLP), 84–130 (CNCN…GCAQ), and 139–186 (CDCD…GCTQ). One can recognise a Laminin EGF-like 4; first part domain in the interval 187-196 (CFCYGHSASC). The 169-residue stretch at 213 to 381 (QDVDGWKAVQ…SGAPAPWVEQ (169 aa)) folds into the Laminin IV type A domain. Asparagine 342 and asparagine 362 each carry an N-linked (GlcNAc...) asparagine glycan. The region spanning 382–415 (CVCPVGYKGQFCQDCASGYKRDSARLGPFGTCIP) is the Laminin EGF-like 4; second part domain. 3 consecutive Laminin EGF-like domains span residues 416-462 (CNCQ…SCKP), 463-517 (CPCR…PCQP), and 518-573 (CQCN…KCRA). Intrachain disulfides connect cysteine 463–cysteine 471, cysteine 465–cysteine 482, cysteine 485–cysteine 494, cysteine 497–cysteine 515, cysteine 518–cysteine 532, cysteine 520–cysteine 539, cysteine 542–cysteine 551, cysteine 554–cysteine 571, cysteine 574–cysteine 586, cysteine 576–cysteine 592, and cysteine 594–cysteine 603. A Laminin EGF-like 8; truncated domain is found at 574-603 (CNCNPVGSEPVECRSDGSCVCKPGFGGLSC). The tract at residues 604–1190 (EHAALTSCPA…CYNTQALEQQ (587 aa)) is domain II and I. A coiled-coil region spans residues 613–718 (ACYNQVKVQM…GSQYQNQVQD (106 aa)). Serine 803 is a glycosylation site (O-linked (Xyl...) (chondroitin sulfate) serine). 2 coiled-coil regions span residues 809 to 1073 (AVVQ…AVQM) and 1114 to 1190 (EERL…LEQQ). N-linked (GlcNAc...) asparagine glycosylation is found at asparagine 939 and asparagine 1030.

Laminin is a complex glycoprotein, consisting of three different polypeptide chains (alpha, beta, gamma), which are bound to each other by disulfide bonds into a cross-shaped molecule comprising one long and three short arms with globules at each end. Gamma-2 is a subunit of laminin-5 (laminin-332 or epiligrin/kalinin/nicein). O-glycosylated; contains chondroitin sulfate (CS).

It is found in the secreted. It localises to the extracellular space. The protein localises to the extracellular matrix. Its subcellular location is the basement membrane. Its function is as follows. Binding to cells via a high affinity receptor, laminin is thought to mediate the attachment, migration and organization of cells into tissues during embryonic development by interacting with other extracellular matrix components. Ladsin exerts cell-scattering activity toward a wide variety of cells, including epithelial, endothelial, and fibroblastic cells. The polypeptide is Laminin subunit gamma-2 (LAMC2) (Equus caballus (Horse)).